The following is a 164-amino-acid chain: R-phycoerythrin alpha chain (164 aa).

Positions 47, 81, 82, 84, 88, 137, 139, and 142 each coordinate (2R,3E)-phycoerythrobilin.

This sequence belongs to the phycobiliprotein family. As to quaternary structure, heterododecamer of 6 alpha and 6 beta chains. The basic functional unit of phycobiliproteins is a ring-shaped hexamer formed from two back-to-back trimers contacting via the alpha chain subunits. The trimers are composed of alpha/beta subunit heterodimers arranged around a three-fold axis of symmetry. The phycoerythrins also contain a gamma subunit which is located in the center of the hexamer. Post-translationally, contains two covalently linked phycoerythrobilin chromophores. In PubMed:8876649 the authors refer to the bilins as phycoerythrobilins. In the PDB entries, the bilins are named as phycocyanobilins although the modeled compounds correspond to phycoerythrobilins.

Its subcellular location is the plastid. The protein resides in the chloroplast thylakoid membrane. Functionally, light-harvesting photosynthetic tetrapyrrole chromophore-protein from the phycobiliprotein complex. This Polysiphonia urceolata (Red alga) protein is R-phycoerythrin alpha chain (cpeA).